The following is a 195-amino-acid chain: Protein lin-28 homolog A (195 aa).

The CSD domain maps to 33 to 106 (QGSGVCKWFN…GLESTRVTGP (74 aa)). The tract at residues 98–126 (LESTRVTGPGGAPCIGSERRPKVKGQQKR) is disordered. A flexible linker region spans residues 107 to 130 (GGAPCIGSERRPKVKGQQKRRQKG). 2 consecutive CCHC-type zinc fingers follow at residues 131–148 (DRCY…ECKL) and 153–170 (KKCH…QCPA). Cys133, Cys136, His141, Cys146, Cys155, Cys158, His163, and Cys168 together coordinate Zn(2+). The tract at residues 175–195 (AANLEEQPISEEQELIPETME) is disordered. Over residues 182-195 (PISEEQELIPETME) the composition is skewed to acidic residues.

The protein belongs to the lin-28 family. In terms of assembly, monomer.

The protein resides in the cytoplasm. The protein localises to the rough endoplasmic reticulum. Its subcellular location is the P-body. It is found in the stress granule. It localises to the nucleus. The protein resides in the nucleolus. Its function is as follows. RNA-binding protein that inhibits processing of pre-let-7 miRNAs and regulates translation of mRNAs that control developmental timing, pluripotency and metabolism. Seems to recognize a common structural G-quartet (G4) feature in its miRNA and mRNA targets. 'Translational enhancer' that drives specific mRNAs to polysomes and increases the efficiency of protein synthesis. Its association with the translational machinery and target mRNAs results in an increased number of initiation events per molecule of mRNA and, indirectly, in mRNA stabilization. Suppressor of microRNA (miRNA) biogenesis, including that of let-7. Binds specific target miRNA precursors (pre-miRNAs), recognizing an 5'-GGAG-3' motif found in their terminal loop, and recruits uridylyltransferase. This results in the terminal uridylation of target pre-miRNAs. Uridylated pre-miRNAs fail to be processed by Dicer and undergo degradation. Localized to the periendoplasmic reticulum area, binds to a large number of spliced mRNAs and inhibits the translation of mRNAs destined for the ER, reducing the synthesis of transmembrane proteins, ER or Golgi lumen proteins, and secretory proteins. Binds to and enhances the translation of mRNAs for several metabolic enzymes, increasing glycolysis and oxidative phosphorylation. Which, with the let-7 repression may enhance tissue repair in adult tissue. This Xenopus tropicalis (Western clawed frog) protein is Protein lin-28 homolog A (lin28a).